We begin with the raw amino-acid sequence, 131 residues long: Interleukin-13 (131 aa).

The N-terminal stretch at Met-1–Ala-18 is a signal peptide. 4 N-linked (GlcNAc...) asparagine glycosylation sites follow: Asn-39, Asn-50, Asn-58, and Asn-74. 2 disulfide bridges follow: Cys-49–Cys-78 and Cys-66–Cys-92.

The protein belongs to the IL-4/IL-13 family. In terms of assembly, interacts with IL13RA2.

Its subcellular location is the secreted. Cytokine that plays important roles in allergic inflammation and immune response to parasite infection. Synergizes with IL2 in regulating interferon-gamma synthesis. Stimulates B-cell proliferation, and activation of eosinophils, basophils, and mast cells. Plays an important role in controlling IL33 activity by modulating the production of transmembrane and soluble forms of interleukin-1 receptor-like 1/IL1RL1. Displays the capacity to antagonize Th1-driven proinflammatory immune response and downregulates synthesis of many proinflammatory cytokines including IL1, IL6, IL10, IL12 and TNF-alpha through a mechanism that partially involves suppression of NF-kappa-B. Also functions on nonhematopoietic cells, including endothelial cells where it induces vascular cell adhesion protein 1/VCAM1, which is important in the recruitment of eosinophils. Exerts its biological effects through its receptors which comprises the IL4R chain and the IL13RA1 chain, to activate JAK1 and TYK2, leading to the activation of STAT6. Aside from IL13RA1, another receptor IL13RA2 acts as a high affinity decoy for IL13 and mediates internalization and depletion of extracellular IL13. The sequence is that of Interleukin-13 (IL13) from Sus scrofa (Pig).